The sequence spans 462 residues: tRNA modification GTPase MnmE (462 aa).

Residues R23, E88, and R127 each coordinate (6S)-5-formyl-5,6,7,8-tetrahydrofolate. One can recognise a TrmE-type G domain in the interval 224-383 (GLATVIIGRP…LEKAIADLFF (160 aa)). A K(+)-binding site is contributed by N234. Residues 234–239 (NVGKSS), 253–259 (TDIPGTT), and 278–281 (DTAG) each bind GTP. Mg(2+) is bound at residue S238. T253, I255, and T258 together coordinate K(+). T259 contributes to the Mg(2+) binding site. Position 462 (K462) interacts with (6S)-5-formyl-5,6,7,8-tetrahydrofolate.

Belongs to the TRAFAC class TrmE-Era-EngA-EngB-Septin-like GTPase superfamily. TrmE GTPase family. In terms of assembly, homodimer. Heterotetramer of two MnmE and two MnmG subunits. K(+) is required as a cofactor.

Its subcellular location is the cytoplasm. Functionally, exhibits a very high intrinsic GTPase hydrolysis rate. Involved in the addition of a carboxymethylaminomethyl (cmnm) group at the wobble position (U34) of certain tRNAs, forming tRNA-cmnm(5)s(2)U34. The protein is tRNA modification GTPase MnmE of Geobacillus kaustophilus (strain HTA426).